A 161-amino-acid polypeptide reads, in one-letter code: Allophycocyanin beta subunit (161 aa).

Asn71 bears the N4-methylasparagine mark. Cys81 is a (2R,3E)-phycocyanobilin binding site.

It belongs to the phycobiliprotein family. In terms of assembly, heterodimer of an alpha and a beta chain. In terms of processing, contains one covalently linked phycocyanobilin chromophore. The chromophore is added by the phycocyanobilin lyase CpcUS.

Its subcellular location is the cellular thylakoid membrane. Functionally, light-harvesting photosynthetic bile pigment-protein from the phycobiliprotein complex. Allophycocyanin has a maximum absorption at approximately 650 nanometers. This is Allophycocyanin beta subunit (apcB) from Picosynechococcus sp. (strain ATCC 27264 / PCC 7002 / PR-6) (Agmenellum quadruplicatum).